The sequence spans 199 residues: Imidazoleglycerol-phosphate dehydratase (199 aa).

This sequence belongs to the imidazoleglycerol-phosphate dehydratase family.

It is found in the cytoplasm. The enzyme catalyses D-erythro-1-(imidazol-4-yl)glycerol 3-phosphate = 3-(imidazol-4-yl)-2-oxopropyl phosphate + H2O. The protein operates within amino-acid biosynthesis; L-histidine biosynthesis; L-histidine from 5-phospho-alpha-D-ribose 1-diphosphate: step 6/9. This is Imidazoleglycerol-phosphate dehydratase from Bifidobacterium longum (strain NCC 2705).